A 201-amino-acid polypeptide reads, in one-letter code: FMN-dependent NADH:quinone oxidoreductase (201 aa).

Residues 92–95 and 136–139 each bind FMN; these read MWNL and STGG.

This sequence belongs to the azoreductase type 1 family. In terms of assembly, homodimer. Requires FMN as cofactor.

It carries out the reaction 2 a quinone + NADH + H(+) = 2 a 1,4-benzosemiquinone + NAD(+). It catalyses the reaction N,N-dimethyl-1,4-phenylenediamine + anthranilate + 2 NAD(+) = 2-(4-dimethylaminophenyl)diazenylbenzoate + 2 NADH + 2 H(+). Functionally, quinone reductase that provides resistance to thiol-specific stress caused by electrophilic quinones. Also exhibits azoreductase activity. Catalyzes the reductive cleavage of the azo bond in aromatic azo compounds to the corresponding amines. The chain is FMN-dependent NADH:quinone oxidoreductase from Coprothermobacter proteolyticus (strain ATCC 35245 / DSM 5265 / OCM 4 / BT).